The following is a 1056-amino-acid chain: PH and SEC7 domain-containing protein 4 (1056 aa).

The span at 25 to 42 shows a compositional bias: basic and acidic residues; that stretch reads LEPHPGECPRETCSHEDP. 6 disordered regions span residues 25-71, 87-149, 195-239, 340-362, 388-533, and 546-581; these read LEPH…SGVE, CQEQ…QNRS, LPGD…QWGA, GAPA…APSA, VQPW…GDVQ, and LRTP…LANG. Composition is skewed to polar residues over residues 88-99 and 128-137; these read QEQTRATDPPES and NTASPGSPVN. Residues Ser-131, Ser-134, and Ser-143 each carry the phosphoserine modification. The segment covering 207-220 has biased composition (acidic residues); sequence ENEDSGEDSSEPEG. Position 413 is a phosphoserine (Ser-413). A compositionally biased stretch (basic and acidic residues) spans 414–423; it reads QDRDEREGGH. A compositionally biased stretch (low complexity) spans 438–456; that stretch reads RSPASSPEPSSPESESRGP. A phosphoserine mark is found at Ser-448, Ser-469, and Ser-491. Composition is skewed to polar residues over residues 466–476 and 486–502; these read QEGSPQLQHHS and DASQ…QPSS. Residues 504–522 are compositionally biased toward basic and acidic residues; sequence KKKEAGEAPKPGEEVKSEG. In terms of domain architecture, SEC7 spans 544-736; sequence ENLRTPMNSS…KALYWSIRSE (193 aa). Over residues 548–567 the composition is skewed to polar residues; sequence TPMNSSWLPGSPMPQAQSPE. One can recognise a PH domain in the interval 776-892; sequence PTYKQGILAR…WIARINLAAA (117 aa). Residues 921-976 are a coiled coil; sequence SSLEEQHRSHENCLDAAADDLLDLQRNLPERRGRGRELEEHRLRKEYLEYEKTRYE. Residues 1004–1056 are disordered; it reads AGGTREPKLSLKKSHSSPSLHQDEAPTTAKVKRNISERRTYRKIIPKRNRNQL. A phosphoserine mark is found at Ser-1019 and Ser-1022. Over residues 1043–1056 the composition is skewed to basic residues; that stretch reads TYRKIIPKRNRNQL.

In terms of tissue distribution, widely expressed. Highest levels of expression are found in placenta, pancreas, spleen, thymus and peripheral blood.

It is found in the cell membrane. The protein localises to the cell projection. The protein resides in the ruffle membrane. In terms of biological role, guanine nucleotide exchange factor for ARF6 and ARL14/ARF7. Through ARL14 activation, controls the movement of MHC class II-containing vesicles along the actin cytoskeleton in dendritic cells. Involved in membrane recycling. Interacts with several phosphatidylinositol phosphate species, including phosphatidylinositol 3,4-bisphosphate, phosphatidylinositol 3,5-bisphosphate and phosphatidylinositol 4,5-bisphosphate. This is PH and SEC7 domain-containing protein 4 (PSD4) from Homo sapiens (Human).